The primary structure comprises 284 residues: 4-diphosphocytidyl-2-C-methyl-D-erythritol kinase (284 aa).

The active site involves K14. An ATP-binding site is contributed by 98-108 (PMGGGLGGGSS). The active site involves D140.

It belongs to the GHMP kinase family. IspE subfamily.

The catalysed reaction is 4-CDP-2-C-methyl-D-erythritol + ATP = 4-CDP-2-C-methyl-D-erythritol 2-phosphate + ADP + H(+). It functions in the pathway isoprenoid biosynthesis; isopentenyl diphosphate biosynthesis via DXP pathway; isopentenyl diphosphate from 1-deoxy-D-xylulose 5-phosphate: step 3/6. In terms of biological role, catalyzes the phosphorylation of the position 2 hydroxy group of 4-diphosphocytidyl-2C-methyl-D-erythritol. This Shewanella sp. (strain MR-4) protein is 4-diphosphocytidyl-2-C-methyl-D-erythritol kinase.